We begin with the raw amino-acid sequence, 215 residues long: 23.2 kDa heat shock protein (215 aa).

The N-terminal stretch at 1–27 (MASMRTAAAAAMLACIAVVLASTAADG) is a signal peptide. A sHSP domain is found at 69-189 (DVAMLSMARV…GPRVVGIASA (121 aa)). The interval 183–215 (VVGIASAGGDDGGKKSIGGAGEGQNQQAKKVEL) is disordered. Polar residues predominate over residues 205–215 (GQNQQAKKVEL).

The protein belongs to the small heat shock protein (HSP20) family. In terms of assembly, may form oligomeric structures.

It localises to the endoplasmic reticulum. The protein is 23.2 kDa heat shock protein (HSP23.2) of Oryza sativa subsp. japonica (Rice).